The sequence spans 303 residues: N-acetyl-D-glucosamine kinase (303 aa).

ATP contacts are provided by residues 4–11 (GFDIGGTK) and 133–140 (GVGGGLVL). Zn(2+) is bound by residues H157, C177, C179, and C184.

This sequence belongs to the ROK (NagC/XylR) family. NagK subfamily.

The enzyme catalyses N-acetyl-D-glucosamine + ATP = N-acetyl-D-glucosamine 6-phosphate + ADP + H(+). It participates in cell wall biogenesis; peptidoglycan recycling. Catalyzes the phosphorylation of N-acetyl-D-glucosamine (GlcNAc) derived from cell-wall degradation, yielding GlcNAc-6-P. This is N-acetyl-D-glucosamine kinase from Salmonella arizonae (strain ATCC BAA-731 / CDC346-86 / RSK2980).